The chain runs to 368 residues: sn-1 linoleoyl-lipid 6-desaturase (368 aa).

A run of 2 helical transmembrane segments spans residues 47–67 (IILAWVVSAWTFVVFGPDVLW) and 68–88 (MKLLGCIVLGFGVSAVGFNIS). Positions 89-93 (HDGNH) match the Histidine box-1 motif. A Histidine box-2 motif is present at residues 124-129 (HNVLHH). 3 helical membrane-spanning segments follow: residues 164 to 184 (WFIWFVYPFIPYYWSIADVQT), 204 to 224 (IATLLAFKAFGVAVFLIIPIA), and 233 to 253 (VIGASIVYMTHGLVACVVFML). The short motif at 305–309 (HHLFP) is the Histidine box-3 element.

The protein belongs to the fatty acid desaturase type 2 family. It depends on Fe(2+) as a cofactor.

It localises to the cell inner membrane. The protein resides in the cellular thylakoid membrane. It catalyses the reaction a 1-[(9Z,12Z)-octadecdienoyl]-2-acyl-glycerolipid + 2 reduced [2Fe-2S]-[ferredoxin] + O2 + 2 H(+) = a 1-[(6Z,9Z,12Z)-octadectrienoyl]-2-acyl-glycerolipid + 2 oxidized [2Fe-2S]-[ferredoxin] + 2 H2O. It functions in the pathway lipid metabolism; polyunsaturated fatty acid biosynthesis. Activity requires ferredoxin, which is the natural electron donor, or cytochrome b5. In addition, activity is increased in the presence of the intermediate electron donors, NADPH and FADH(2). Functionally, desaturase involved in fatty acid biosynthesis. Introduces a double bond at carbon 6 of linoleoyl group (18:2) attached to the sn-1 position of the glycerol moiety of membrane glycerolipids, leading to the formation of gamma-linolenic acid (GLA). The protein is sn-1 linoleoyl-lipid 6-desaturase of Arthrospira platensis (Spirulina platensis).